Consider the following 683-residue polypeptide: DNA-directed RNA polymerase subunit beta' (683 aa).

Positions 69, 71, 87, and 90 each coordinate Zn(2+). D489, D491, and D493 together coordinate Mg(2+).

This sequence belongs to the RNA polymerase beta' chain family. RpoC1 subfamily. As to quaternary structure, in plastids the minimal PEP RNA polymerase catalytic core is composed of four subunits: alpha, beta, beta', and beta''. When a (nuclear-encoded) sigma factor is associated with the core the holoenzyme is formed, which can initiate transcription. Requires Mg(2+) as cofactor. It depends on Zn(2+) as a cofactor.

It is found in the plastid. Its subcellular location is the chloroplast. The enzyme catalyses RNA(n) + a ribonucleoside 5'-triphosphate = RNA(n+1) + diphosphate. In terms of biological role, DNA-dependent RNA polymerase catalyzes the transcription of DNA into RNA using the four ribonucleoside triphosphates as substrates. This is DNA-directed RNA polymerase subunit beta' from Sorghum bicolor (Sorghum).